The primary structure comprises 1367 residues: MTSTSPKSRKSSSKRKGSKKKAARSKNVIPPLSKTPPSFRNCVVDKKSLKQLVAWAFKNHGTAVTAAMADNLKDLGFKYATQAAVSISVDDLKVPEAKQDLLGQAEEQITATEECYRLGEITEVERHTKVIDTWTETNERLVDAVKKNFNHNDPLNSVWMMANSGARGNMSQVRQLVGMRGLMANPQGEIIDLPIRTNFREGLTVTEYVISSYGARKGLVDTALRTADSGYLTRRLVDVAQDVIVREEDCGTTRAILINAEDGRFGNRLVGRLVAEDIVDQEDAVIAKRDTAIDPELSKKIEKANVNGVMIRSPLTCEATRSVCRKCYGWALAHNQLVDLGEAVGIIAAQSIGEPGTQLTMRTFHTGGVSTAETGVVRSNLAGKVEFGPKARVRGYRTPHGVEAQQAEVDFLLHIKPTEKGKGQKVEISSGSLIFVEDGQEVDADVTLAQIAAGAIKKSVEKATKDVICDLAGQVRYEEAIQPKEVTDRQGNITLKAQRLGRLWVLAGDVYNLPPNAKPVIASNANVQAGKVLAEASQSSEFGGEVRLRDSIGDSREVQIVTTSMTLKDYNLLEESNHSGEIWNLEANDGTRYRINSIPGSKIGNNEVIAELSDDRFRTKTGGLVKYAPGLAIKKARSAKNGFEVSNGGSLLWIPQETHEINKDISLLMIQDRQWIEAGTEVVKDIFSQTAGIVTVTQKNDILREIIVRSGEFHLCTDSNILERFDNEGQIVNPGETIAKGIKPEAMVFVQTIETTEGKGVLLRPVEEYTIPDKAQLPELSHVTQQQGPSLGLKATQRLGYKDGELIKSVEGVELLKTQLILETFDTTPQMTVDVEVTEDQSTKTIQRLRLVILESILVRRDTISDSSHGSTHTELQVKDQQIVKAGDIVATTQILCKEKGIVQLPEMKEDEPIRRLIVERQEDTVTLTAASKPVVKIGQRVIDGDLLSNEEPINCCGEIEAIKENKVTLRLGRPYMVSPDSVLHVKNGDLVQRGDGLALLVFERQKTGDIVQGLPRIEELLEARRPRDSAILCKRRGIVEINQGDDDDSVVVKVIESDDLIEEYPILLGKNVMISDGQEVKAGELLTDGPVNPHELLECFFGDLRDRKPLMEAAQEAIAKLQHRLVTEVQNVYKSQGVAIDDKHIEVIVRQMTSKVRIEDAGDTTLLPGELIEIRQVEDTNQAISITGGAPAEFTPVLLGITKASLNTDSFISAASFQETTRVLTEAAIEGKSDWLRGLKENVIIGRLIPAGTGFSGFVEELRAEAGPHPDILAEDPAGYRRIQNLRPDYTVEMPSSPAAANLTSVLDDPSDADLEATRNRHGIDPSTSNFAAFARPSGDDNFQEDQSPDPAALEGLQEEGLLSDE.

The segment at 1 to 34 is disordered; the sequence is MTSTSPKSRKSSSKRKGSKKKAARSKNVIPPLSK. Positions 7-24 are enriched in basic residues; it reads KSRKSSSKRKGSKKKAAR. Residues Cys250, Cys317, Cys324, and Cys327 each contribute to the Zn(2+) site. Residues 1306 to 1367 are disordered; that stretch reads SVLDDPSDAD…LQEEGLLSDE (62 aa). The span at 1355–1367 shows a compositional bias: low complexity; sequence LEGLQEEGLLSDE.

It belongs to the RNA polymerase beta' chain family. RpoC2 subfamily. As to quaternary structure, in cyanobacteria the RNAP catalytic core is composed of 2 alpha, 1 beta, 1 beta', 1 gamma and 1 omega subunit. When a sigma factor is associated with the core the holoenzyme is formed, which can initiate transcription. Zn(2+) serves as cofactor.

The enzyme catalyses RNA(n) + a ribonucleoside 5'-triphosphate = RNA(n+1) + diphosphate. In terms of biological role, DNA-dependent RNA polymerase catalyzes the transcription of DNA into RNA using the four ribonucleoside triphosphates as substrates. This Prochlorococcus marinus (strain SARG / CCMP1375 / SS120) protein is DNA-directed RNA polymerase subunit beta'.